Here is a 295-residue protein sequence, read N- to C-terminus: Protein shisa-2 homolog (295 aa).

The signal sequence occupies residues 1–33 (MWGARRSSVSSSWNAASLLQLLLAALLAAGARA). Residues 34-110 (SGEYCHGWLD…RADKDGPDGS (77 aa)) are Extracellular-facing. The disordered stretch occupies residues 87–108 (GCDNDRQQGAGEPGRADKDGPD). Residues 111-131 (AVPIYVPFLIVGSVFVAFIIL) traverse the membrane as a helical segment. Over 132-295 (GSLVAACCCR…EQKMYPAVTV (164 aa)) the chain is Cytoplasmic. The tract at residues 168–205 (PSASTSRGSSSRQSSTAASSSSSANSGARAPPTRSQTN) is disordered. Low complexity predominate over residues 169-197 (SASTSRGSSSRQSSTAASSSSSANSGARA).

Belongs to the shisa family.

The protein localises to the endoplasmic reticulum membrane. In terms of biological role, plays an essential role in the maturation of presomitic mesoderm cells by individual attenuation of both FGF and WNT signaling. In Homo sapiens (Human), this protein is Protein shisa-2 homolog (SHISA2).